Here is a 357-residue protein sequence, read N- to C-terminus: MSQSGKNGLTYSDAGVDIDNGNLLVEKIKPAVRSTRRPGADGEIGGFGGLFDLKAAGFTDPVLVAANDGVGTKLKIAIDADYHDTVGIDLVAMCVNDLVVQGAEPLFFLDYFATGKLVPDQGAAIVGGIAAGCREAGCALIGGETAEMPGMYSSGDYDLAGFAVGAAERGKLLPSGDIAEGDVILGLASSGVHSNGFSLVRKIVELSGLGWDAPAPFAEGKKLGEALLEPTRIYVKPLLKAIRETGALKALAHITGGGFPENIPRVLPEHLAAEIDLGAVKVPPVFSWLARTGGVEAKEMLRTFNCGIGMIVVVAEENVAAVSKALEAEGEKVVTLGRMIARAEGAAGTVYKGTLAI.

It belongs to the AIR synthase family.

It localises to the cytoplasm. It catalyses the reaction 2-formamido-N(1)-(5-O-phospho-beta-D-ribosyl)acetamidine + ATP = 5-amino-1-(5-phospho-beta-D-ribosyl)imidazole + ADP + phosphate + H(+). Its pathway is purine metabolism; IMP biosynthesis via de novo pathway; 5-amino-1-(5-phospho-D-ribosyl)imidazole from N(2)-formyl-N(1)-(5-phospho-D-ribosyl)glycinamide: step 2/2. This Rhizobium etli (strain ATCC 51251 / DSM 11541 / JCM 21823 / NBRC 15573 / CFN 42) protein is Phosphoribosylformylglycinamidine cyclo-ligase.